The primary structure comprises 2198 residues: Activating signal cointegrator 1 complex subunit 3 (2198 aa).

Position 12 is a phosphoserine (Ser12). 2 coiled-coil regions span residues 18–81 and 328–356; these read KQDN…KQIV and IQSE…KAGE. The Helicase ATP-binding 1 domain occupies 487 to 670; sequence ETAYNTNENM…FLHVNPYIGL (184 aa). Residue 500–507 coordinates ATP; the sequence is APTGAGKT. Lys573 carries the post-translational modification N6-acetyllysine. The short motif at 612–615 is the DEVH box element; sequence DEVH. The Helicase C-terminal 1 domain occupies 697–915; sequence QLNNMDEVCY…GTVTNVEEAV (219 aa). The SEC63 1 domain maps to 979-1288; it reads STDLGRTASH…GAEAVCIINF (310 aa). The Helicase ATP-binding 2 domain occupies 1337–1512; it reads HTLYHTDCNV…WLNIKQMGLF (176 aa). 1350–1357 is a binding site for ATP; that stretch reads APTGSGKT. The DEIH box signature appears at 1454–1457; the sequence is DEIH. A Helicase C-terminal 2 domain is found at 1545–1740; that stretch reads PAFQAIRSHS…VLSDHLNAEI (196 aa). One can recognise an SEC63 2 domain in the interval 1813 to 2177; sequence PLTCGRIASY…LGLDQQYDIY (365 aa).

This sequence belongs to the helicase family. As to quaternary structure, identified in the ASCC complex that contains ASCC1, ASCC2 and ASCC3. Functions as a scaffolding subunit that interacts directly with both ASCC1 and ASCC2. Interacts directly with ALKBH3, and thereby recruits ALKBH3 to the ASCC complex. Part of the ASC-1/TRIP4 complex, that contains TRIP4, ASCC1, ASCC2 and ASCC3. Part of the RQT (ribosome quality control trigger) complex, that contains ASCC2, ASCC3 and TRIP4. Associates with ribosomes; recruited to collided ribosomes. Interacts with ZCCHC4. Interacts with ZNF598. Interacts with RPS3.

It is found in the nucleus. It localises to the nucleus speckle. The protein localises to the cytoplasm. Its subcellular location is the cytosol. The catalysed reaction is Couples ATP hydrolysis with the unwinding of duplex DNA by translocating in the 3'-5' direction.. It carries out the reaction ATP + H2O = ADP + phosphate + H(+). Its function is as follows. ATPase involved both in DNA repair and rescue of stalled ribosomes. 3'-5' DNA helicase involved in repair of alkylated DNA: promotes DNA unwinding to generate single-stranded substrate needed for ALKBH3, enabling ALKBH3 to process alkylated N3-methylcytosine (3mC) within double-stranded regions. Also involved in activation of the ribosome quality control (RQC) pathway, a pathway that degrades nascent peptide chains during problematic translation. Drives the splitting of stalled ribosomes that are ubiquitinated in a ZNF598-dependent manner, as part of the ribosome quality control trigger (RQT) complex. Part of the ASC-1 complex that enhances NF-kappa-B, SRF and AP1 transactivation. The polypeptide is Activating signal cointegrator 1 complex subunit 3 (Ascc3) (Mus musculus (Mouse)).